Here is a 456-residue protein sequence, read N- to C-terminus: Amino acid transporter AVT6B (456 aa).

Transmembrane regions (helical) follow at residues 37–57 (FSGA…MALP), 58–78 (ATMK…MAFL), 118–138 (ILVS…DVLA), 164–184 (TFVL…FKRI), 191–211 (SAIS…ITII), 236–256 (LFTV…VHSI), 273–293 (ALAM…LLFG), 328–348 (LMLV…GLIF), 365–385 (SITA…PSIW), 388–408 (FQFT…AAVI), and 423–443 (IAIC…YSDA).

The protein belongs to the amino acid/polyamine transporter 2 family. Amino acid/auxin permease (AAAP) (TC 2.A.18.6) subfamily.

The protein resides in the membrane. In Arabidopsis thaliana (Mouse-ear cress), this protein is Amino acid transporter AVT6B.